The chain runs to 284 residues: Pantothenate synthetase (284 aa).

Position 30–37 (30–37 (MGNLHEGH)) interacts with ATP. Histidine 37 functions as the Proton donor in the catalytic mechanism. Glutamine 61 contributes to the (R)-pantoate binding site. Residue glutamine 61 coordinates beta-alanine. Residue 149–152 (GEKD) coordinates ATP. Residue glutamine 155 coordinates (R)-pantoate. ATP-binding positions include valine 178 and 186–189 (LSSR).

The protein belongs to the pantothenate synthetase family. In terms of assembly, homodimer.

It is found in the cytoplasm. The catalysed reaction is (R)-pantoate + beta-alanine + ATP = (R)-pantothenate + AMP + diphosphate + H(+). It functions in the pathway cofactor biosynthesis; (R)-pantothenate biosynthesis; (R)-pantothenate from (R)-pantoate and beta-alanine: step 1/1. Functionally, catalyzes the condensation of pantoate with beta-alanine in an ATP-dependent reaction via a pantoyl-adenylate intermediate. This is Pantothenate synthetase from Yersinia pseudotuberculosis serotype O:1b (strain IP 31758).